The chain runs to 109 residues: Photosystem II reaction center Psb28 protein (109 aa).

It belongs to the Psb28 family. In terms of assembly, part of the photosystem II complex.

Its subcellular location is the plastid. The protein localises to the chloroplast thylakoid membrane. The polypeptide is Photosystem II reaction center Psb28 protein (Cyanidioschyzon merolae (strain NIES-3377 / 10D) (Unicellular red alga)).